The sequence spans 56 residues: UPF0339 protein NMA1193/NMA1859 (56 aa).

It belongs to the UPF0339 family.

The sequence is that of UPF0339 protein NMA1193/NMA1859 from Neisseria meningitidis serogroup A / serotype 4A (strain DSM 15465 / Z2491).